The following is a 396-amino-acid chain: NAD(P)H oxidoreductase RTN4IP1, mitochondrial (396 aa).

Residues 1-40 constitute a mitochondrion transit peptide; it reads MGFLKTCVFRRNACTAVCFWRSQVVQKPSVRKISTTSPRS. An Enoyl reductase (ER) domain is found at 52–393; the sequence is GSNEVLRFTQ…RGHARGKTVI (342 aa). Residues Ser214, Gly216, Val217, Ser237, Tyr255, Asn276, Leu300, Ala341, Phe343, His386, Ala387, and Arg388 each contribute to the NADPH site.

This sequence belongs to the zinc-containing alcohol dehydrogenase family. Quinone oxidoreductase subfamily. Interacts with RTN4, UQCRC1 and UQCRC2.

The protein resides in the mitochondrion matrix. Its subcellular location is the mitochondrion outer membrane. It carries out the reaction a 3-demethylubiquinone + NADH + 2 H(+) = a 3-demethylubiquinol + NAD(+). The enzyme catalyses a 3-demethylubiquinone + NADPH + 2 H(+) = a 3-demethylubiquinol + NADP(+). It catalyses the reaction 3-demethylubiquinone-10 + NADH + 2 H(+) = 3-demethylubiquinol-10 + NAD(+). The catalysed reaction is 3-demethylubiquinone-10 + NADPH + 2 H(+) = 3-demethylubiquinol-10 + NADP(+). It participates in cofactor biosynthesis; ubiquinone biosynthesis. Its function is as follows. NAD(P)H oxidoreductase involved in the ubiquinone biosynthetic pathway. Required for the O-methyltransferase activity of COQ3. Able to catalyze the oxidoreduction of 3-demethylubiquinone into 3-demethylubiquinol in vitro. However, it is unclear if 3-demethylubiquinone constitutes a substrate in vivo. May also play a role in the regulation of retinal ganglion cell (RGC) neurite outgrowth, and hence in the development of the inner retina and optic nerve. Appears to be a potent inhibitor of regeneration following spinal cord injury. The chain is NAD(P)H oxidoreductase RTN4IP1, mitochondrial (RTN4IP1) from Bos taurus (Bovine).